A 933-amino-acid chain; its full sequence is Anoctamin-7 (933 aa).

Residues 1-355 (MRMAATAWAG…YFAWLGFYTG (355 aa)) lie on the Cytoplasmic side of the membrane. The interval 43 to 101 (ETSSGSHCARSRMLRRRAQEEDSTVLIDVSPPEAEKRGSYGSTAHASEPGGQQAAACRA) is disordered. A helical transmembrane segment spans residues 356–376 (WLLPAAVVGTLVFLVGCFLVF). Residues 377–420 (SDIPTQELCGSKDSFEMCPLCLDCPFWLLSSACALAQAGRLFDH) are Extracellular-facing. A helical transmembrane segment spans residues 421–441 (GGTVFFSLFMALWAVLLLEYW). Topologically, residues 442-499 (KRKSATLAYRWDCSDYEDTEERPRPQFAASAPMTAPNPITGEDEPYFPERSRARRMLA) are cytoplasmic. The chain crosses the membrane as a helical span at residues 500 to 520 (GSVVIVVMVAVVVMCLVSIIL). The Extracellular portion of the chain corresponds to 521–550 (YRAIMAIVVSRSGNTLLAAWASRIASLTGS). A helical transmembrane segment spans residues 551–571 (VVNLVFILILSKIYVSLAHVL). The Cytoplasmic portion of the chain corresponds to 572 to 588 (TRWEMHRTQTKFEDAFT). The chain crosses the membrane as a helical span at residues 589–609 (LKVFIFQFVNFYSSPVYIAFF). The Extracellular portion of the chain corresponds to 610–714 (KGRFVGYPGN…FDEYLEMVLQ (105 aa)). The chain crosses the membrane as a helical span at residues 715–735 (FGFVTIFVAACPLAPLFALLN). Residues 736-763 (NWVEIRLDARKFVCEYRRPVAERAQDIG) lie on the Cytoplasmic side of the membrane. A helical membrane pass occupies residues 764–784 (IWFHILAGLTHLAVISNAFLL). The Extracellular segment spans residues 785-843 (AFSSDFLPRAYYRWTRAHDLRGFLNFTLARAPSSFAAAHNRTCRYRAFRDDDGHYSQTY). Asn809 and Asn824 each carry an N-linked (GlcNAc...) asparagine glycan. The helical transmembrane segment at 844 to 864 (WNLLAIRLAFVIVFEHVVFSV) threads the bilayer. The Cytoplasmic segment spans residues 865–933 (GRLLDLLVPD…TVPKASQLQQ (69 aa)). A disordered region spans residues 902 to 933 (GTNGTKDEQPEGSELSSHWTPFTVPKASQLQQ). Positions 915–933 (ELSSHWTPFTVPKASQLQQ) are enriched in polar residues.

Belongs to the anoctamin family. In terms of tissue distribution, specifically expressed in epithelial cells of the prostate (at protein level).

The protein localises to the cell membrane. The protein resides in the cell junction. It is found in the endoplasmic reticulum. Its subcellular location is the cytoplasm. It localises to the cytosol. It catalyses the reaction a 1,2-diacyl-sn-glycero-3-phospho-L-serine(in) = a 1,2-diacyl-sn-glycero-3-phospho-L-serine(out). The catalysed reaction is a beta-D-galactosyl-(1&lt;-&gt;1')-N-acylsphing-4-enine(out) = a beta-D-galactosyl-(1&lt;-&gt;1')-N-acylsphing-4-enine(in). The enzyme catalyses a 1,2-diacyl-sn-glycero-3-phosphocholine(in) = a 1,2-diacyl-sn-glycero-3-phosphocholine(out). Its function is as follows. Has calcium-dependent phospholipid scramblase activity; scrambles phosphatidylserine, phosphatidylcholine and galactosylceramide. Does not exhibit calcium-activated chloride channel (CaCC) activity. May play a role in cell-cell interactions. The polypeptide is Anoctamin-7 (ANO7) (Homo sapiens (Human)).